Consider the following 156-residue polypeptide: Small ribosomal subunit protein uS7 (156 aa).

Belongs to the universal ribosomal protein uS7 family. As to quaternary structure, part of the 30S ribosomal subunit. Contacts proteins S9 and S11.

In terms of biological role, one of the primary rRNA binding proteins, it binds directly to 16S rRNA where it nucleates assembly of the head domain of the 30S subunit. Is located at the subunit interface close to the decoding center, probably blocks exit of the E-site tRNA. This Macrococcus caseolyticus (strain JCSC5402) (Macrococcoides caseolyticum) protein is Small ribosomal subunit protein uS7.